Consider the following 160-residue polypeptide: Nucleotide-binding protein Bpet3698 (160 aa).

Belongs to the YajQ family.

Nucleotide-binding protein. This is Nucleotide-binding protein Bpet3698 from Bordetella petrii (strain ATCC BAA-461 / DSM 12804 / CCUG 43448).